Here is a 343-residue protein sequence, read N- to C-terminus: Pentatricopeptide repeat-containing protein At1g06270 (343 aa).

PPR repeat units follow at residues 98–133 (PKIV…GCLP), 134–169 (NPQT…GYSP), 170–204 (DTGT…GCIP), 205–240 (DVES…GISP), 241–275 (RKGM…DYPV), and 276–310 (EFES…GFIP).

Belongs to the PPR family. P subfamily.

The chain is Pentatricopeptide repeat-containing protein At1g06270 from Arabidopsis thaliana (Mouse-ear cress).